A 360-amino-acid chain; its full sequence is Photosystem II protein D1 (360 aa).

3 helical membrane passes run 30–47 (YVGW…TAAA), 119–134 (HFLI…QWEL), and 143–157 (WICV…AAFA). His119 contributes to the chlorophyll a binding site. Residue Tyr127 participates in pheophytin a binding. [CaMn4O5] cluster contacts are provided by Asp171 and Glu190. A helical transmembrane segment spans residues 198-219 (FHMAGVAGMFGGSLFSAMHGSL). Residue His199 participates in chlorophyll a binding. Residues His216 and 265–266 (SF) each bind a quinone. His216 contributes to the Fe cation binding site. His273 provides a ligand contact to Fe cation. Residues 275-289 (FLAVFPVVCVWLTSM) traverse the membrane as a helical segment. [CaMn4O5] cluster is bound by residues His333, Glu334, Asp343, and Ala345. A propeptide spanning residues 346 to 360 (AAESTTVALSAPAIG) is cleaved from the precursor.

It belongs to the reaction center PufL/M/PsbA/D family. As to quaternary structure, PSII is composed of 1 copy each of membrane proteins PsbA, PsbB, PsbC, PsbD, PsbE, PsbF, PsbH, PsbI, PsbJ, PsbK, PsbL, PsbM, PsbT, PsbX, PsbY, Psb30/Ycf12, peripheral proteins PsbO, CyanoQ (PsbQ), PsbU, PsbV and a large number of cofactors. It forms dimeric complexes. Requires The D1/D2 heterodimer binds P680, chlorophylls that are the primary electron donor of PSII, and subsequent electron acceptors. It shares a non-heme iron and each subunit binds pheophytin, quinone, additional chlorophylls, carotenoids and lipids. D1 provides most of the ligands for the Mn4-Ca-O5 cluster of the oxygen-evolving complex (OEC). There is also a Cl(-1) ion associated with D1 and D2, which is required for oxygen evolution. The PSII complex binds additional chlorophylls, carotenoids and specific lipids. as cofactor. Tyr-162 forms a radical intermediate that is referred to as redox-active TyrZ, YZ or Y-Z. In terms of processing, C-terminally processed by CtpA; processing is essential to allow assembly of the oxygen-evolving complex and thus photosynthetic growth.

The protein localises to the cellular thylakoid membrane. The enzyme catalyses 2 a plastoquinone + 4 hnu + 2 H2O = 2 a plastoquinol + O2. In terms of biological role, photosystem II (PSII) is a light-driven water:plastoquinone oxidoreductase that uses light energy to abstract electrons from H(2)O, generating O(2) and a proton gradient subsequently used for ATP formation. It consists of a core antenna complex that captures photons, and an electron transfer chain that converts photonic excitation into a charge separation. The D1/D2 (PsbA/PsbD) reaction center heterodimer binds P680, the primary electron donor of PSII as well as several subsequent electron acceptors. This chain is Photosystem II protein D1, found in Prochlorococcus marinus (strain MIT 9301).